The following is a 416-amino-acid chain: CC-adding tRNA nucleotidyltransferase (416 aa).

31–34 is a CTP binding site; it reads GAVR. D46 and D48 together coordinate Mg(2+). Residues 106-107, N111, 148-157, and R188 each bind CTP; these read RD and DPLRLLRAYR.

The protein belongs to the tRNA nucleotidyltransferase/poly(A) polymerase family. It depends on Mg(2+) as a cofactor.

The enzyme catalyses a tRNA precursor + 2 CTP = a tRNA with a 3' CC end + 2 diphosphate. Its function is as follows. tRNA nucleotidyltransferase involved in the synthesis of the tRNA CCA terminus. Adds the two cytidine residues to tRNA. The sequence is that of CC-adding tRNA nucleotidyltransferase from Synechocystis sp. (strain ATCC 27184 / PCC 6803 / Kazusa).